The chain runs to 304 residues: MTVKEYTKSKLPCSILNIKPTVTKSGEDAPLLVWIPGNPGLLYYYQEMLHHLHLKHPDWEILGISHAGMTLNAHSNTPIFSLQDQVDHQVEVINNFSCKNRKIIIMGHSVGAYIVQKVCLSNKLVGSVQKVGLVTPTVMDIHTSEMGIKMTAALRYIPPLAHVVSLFSYIFFYWILSEGFSRFIIDKFMGCGSTGYQAVLSTRIFLTHRQFVRQSLGLAAQEMEEITTNWEFQDRFINYCEENGISIWFLFSSNDHWVSGKTRSHLSDYYKDKVKQERLKIDVTDKIPHSFVVKHAEYAINAFF.

Residues 1 to 155 (MTVKEYTKSK…MGIKMTAALR (155 aa)) are Lumenal-facing. N-linked (GlcNAc...) asparagine glycosylation occurs at asparagine 95. Residues 107–111 (GHSVG) carry the GXSXG motif. Serine 109 (nucleophile) is an active-site residue. An intramembrane segment occupies 156–176 (YIPPLAHVVSLFSYIFFYWIL). Over 177-304 (SEGFSRFIID…HAEYAINAFF (128 aa)) the chain is Lumenal.

Belongs to the AB hydrolase superfamily. LDAH family.

It localises to the lipid droplet. The protein localises to the membrane. The catalysed reaction is a triacylglycerol + H2O = a diacylglycerol + a fatty acid + H(+). In terms of biological role, shows both triacylglycerol (TAG) lipase and ester hydrolase activities. May play a role in TAG homeostasis. This is Lipid droplet-associated triacylglycerol lipase from Saccharomyces cerevisiae (strain ATCC 204508 / S288c) (Baker's yeast).